The sequence spans 327 residues: Pyruvate dehydrogenase E1 component subunit beta (327 aa).

E60 lines the thiamine diphosphate pocket.

In terms of assembly, heterodimer of an alpha and a beta chain. The cofactor is thiamine diphosphate.

It catalyses the reaction N(6)-[(R)-lipoyl]-L-lysyl-[protein] + pyruvate + H(+) = N(6)-[(R)-S(8)-acetyldihydrolipoyl]-L-lysyl-[protein] + CO2. The pyruvate dehydrogenase complex catalyzes the overall conversion of pyruvate to acetyl-CoA and CO(2). It contains multiple copies of three enzymatic components: pyruvate dehydrogenase (E1), dihydrolipoamide acetyltransferase (E2) and lipoamide dehydrogenase (E3). In Acholeplasma laidlawii, this protein is Pyruvate dehydrogenase E1 component subunit beta (pdhB).